Consider the following 264-residue polypeptide: 5'-nucleotidase SurE (264 aa).

A divalent metal cation is bound by residues aspartate 10, aspartate 11, serine 43, and asparagine 99.

The protein belongs to the SurE nucleotidase family. It depends on a divalent metal cation as a cofactor.

It is found in the cytoplasm. It carries out the reaction a ribonucleoside 5'-phosphate + H2O = a ribonucleoside + phosphate. In terms of biological role, nucleotidase that shows phosphatase activity on nucleoside 5'-monophosphates. In Methanococcus vannielii (strain ATCC 35089 / DSM 1224 / JCM 13029 / OCM 148 / SB), this protein is 5'-nucleotidase SurE.